The sequence spans 1131 residues: Phytochrome (1131 aa).

The tract at residues 1–30 is disordered; that stretch reads MASNSRHTQSQSTGSNNRRSSTNTNTTTNK. A compositionally biased stretch (low complexity) spans 9–29; it reads QSQSTGSNNRRSSTNTNTTTN. The region spanning 227–406 is the GAF domain; sequence DVGLLCDTVV…ALGLQLNMEL (180 aa). Cys332 is a binding site for phytochromobilin. 2 consecutive PAS domains span residues 621-692 and 755-826; these read VASE…LRGE and DYRS…TIVL. Residues 903-1123 enclose the Histidine kinase domain; sequence YIRQEIKNPL…LVNVEFPMAQ (221 aa).

Belongs to the phytochrome family. Homodimer. Post-translationally, contains one covalently linked phytochromobilin chromophore.

Regulatory photoreceptor which exists in two forms that are reversibly interconvertible by light: the Pr form that absorbs maximally in the red region of the spectrum and the Pfr form that absorbs maximally in the far-red region. Photoconversion of Pr to Pfr induces an array of morphogenic responses, whereas reconversion of Pfr to Pr cancels the induction of those responses. Pfr controls the expression of a number of nuclear genes including those encoding the small subunit of ribulose-bisphosphate carboxylase, chlorophyll A/B binding protein, protochlorophyllide reductase, rRNA, etc. It also controls the expression of its own gene(s) in a negative feedback fashion. The sequence is that of Phytochrome from Pinus sylvestris (Scotch pine).